Here is a 163-residue protein sequence, read N- to C-terminus: Nucleotide-binding protein GWCH70_0711 (163 aa).

This sequence belongs to the YajQ family.

In terms of biological role, nucleotide-binding protein. The chain is Nucleotide-binding protein GWCH70_0711 from Geobacillus sp. (strain WCH70).